We begin with the raw amino-acid sequence, 106 residues long: CLAVATA3/ESR (CLE)-related protein 21 (106 aa).

The signal sequence occupies residues 1-31; it reads MLILSSRYAMKRDVLIIVIFTVLVLIIISRS. N-linked (GlcNAc...) asparagine glycosylation is present at Asn-47. Residues 72 to 82 show a composition bias toward basic residues; that stretch reads KVRRRSSRFRR. The segment at 72 to 106 is disordered; that stretch reads KVRRRSSRFRRKTDGDEEEEEKRSIPTGPNPLHNK. Hydroxyproline occurs at positions 97 and 100. Residue Pro-100 is glycosylated (O-linked (Ara...) hydroxyproline).

Belongs to the CLV3/ESR signal peptide family. The O-glycosylation (arabinosylation) of the hydroxyproline Pro-100 enhances binding affinity of the CLE21p peptide for its receptor. As to expression, mostly expressed in leaves and apex, and, to a lower extent, in seedlings, flowers, stems and siliques.

It is found in the secreted. The protein resides in the extracellular space. In terms of biological role, extracellular signal peptide that regulates cell fate. Represses root apical meristem maintenance. Regulates the transition of protophloem cells from proliferation to differentiation, thus impinging on postembryonic growth capacity of the root meristem; this signaling pathway requires CRN and CLV2. The polypeptide is CLAVATA3/ESR (CLE)-related protein 21 (Arabidopsis thaliana (Mouse-ear cress)).